We begin with the raw amino-acid sequence, 129 residues long: Large ribosomal subunit protein bL20 (129 aa).

It belongs to the bacterial ribosomal protein bL20 family.

In terms of biological role, binds directly to 23S ribosomal RNA and is necessary for the in vitro assembly process of the 50S ribosomal subunit. It is not involved in the protein synthesizing functions of that subunit. In Mycolicibacterium gilvum (strain PYR-GCK) (Mycobacterium gilvum (strain PYR-GCK)), this protein is Large ribosomal subunit protein bL20.